We begin with the raw amino-acid sequence, 1435 residues long: MGARASVLSGGKLDAWEKIRLRPGGKKKYRLKHLVWASRELERFALNPGLLETPEGCLQIIEQIQPAIKTGTEELKSLFNLVAVLYCVHRKIDVKDTKEALDKIEEIQNKSQQKTQQAAADKEKDNKVSQNYPIVQNAQGQMVHQAISPRTLNAWVKVVEEKAFSPEVIPMFSALSEGATPQDLNAMLNTVGGHQAAMQMLKDTINEEAAEWDRVHPVHAGPIPPGQMREPRGSDIAGTTSTLQEQIAWMTGNPAIPVGDIYKRWIILGLNKIVRMYSPVSILDIKQGPKEPFRDYVDRFFKTLRAEQATQDVKNWMTETLLVQNANPDCKTILRALGQGASIEEMMTACQGVGGPSHKARVLAEAMSQVTNTNTAIMMQKGNFKGQRKFVKCFNCGKEGHIARNCRAPRKKGCWKCGREGHQMKDCTERQAKFFRENLAFQQREARKFSPEQARTNSPTSRELRVRRGDDPLSEAGAAEGQGTSLSFPQITLWQRPLVTVKIEGQLREALLDTGADDTVLEEINLPGKWKPKMIGGIGGFIKVRQYEQVAIEICGKKAIGTVLVGPTPVNIIGRNILTQIGCTLNFPISPIETVPVKLKPGMDGPKVKQWPLTEEKIKALTEICTEMEKEGKISRIGPENPYSTPIFAIKKKDSTKWRKLVDFRELNKRTQDFWEVQLGIPHPAGLKKKKSVSVLDVGDAYFSVPLDKEFRKYTAFTIPSINNETPGIRYQYNVLPQGWKGSPAIFQSSMTKILAPFREQNPEMVIYQYMDDLYVGSDLEIGQHRAKIEELRAHLLKWGFTTPDKKHQKEPPFLWMGYELHPDKWTVQTVKLPEKDSWTVNDIQKLVGKLNWASQIYPNIKVKQLCKLLRGAKALTDIIPLTKEAELELAENREILREPIHGVYYDPSKDLIAEIRKQGQGQWTYQIYQEPFKNLKTGKYAKMRTAHTNDIKQLTEAVQKISTESIVIWGKIPKFRLPIQKETWETWWTEYWQATWIPEWEFVNTPHLVKLWYQLETEPIAGAETYYIDGAANRETKLGKAGYVTDRGKQKVVSLTETTNQKTELQAIYLALQDSGLEVNIVTDSQYALGIIQAQPDKSESELVNQIIEELIKKEKVYLSWVPAHKGIGGNEQVDKLVSSGVRKVLFLDGIDKAQEEHERYHNNWRAVASDFNLPPIVAKEIVASCDKCQLKGEAMHGQVDCSPGIWQLDCTHLEGQVILVAVHVASGYIEAEVIPAETGKETAYFLLKLASRWPVKVIHTDNGSNFTSAAVKAACWWADIQQEFGIPYNPQSQGVVESMNKELKKIIGQVRDQAEHLKTAVQMAVFIHNFKRKGGIGGYSAGERIIDIIATDIQTKELQKQISNIQKFRVYYRDSRDPIWKGPAKLLWKGEGAVVIQDNSEIKVVPRREAKIIRDYGKQMAGDDCVASRQDED.

The N-myristoyl glycine; by host moiety is linked to residue glycine 2. The interaction with Gp41 stretch occupies residues 7-31 (VLSGGKLDAWEKIRLRPGGKKKYRL). Positions 8-43 (LSGGKLDAWEKIRLRPGGKKKYRLKHLVWASRELER) are interaction with host CALM1. The interval 12-19 (KLDAWEKI) is interaction with host AP3D1. The interval 14-33 (DAWEKIRLRPGGKKKYRLKH) is interaction with membrane phosphatidylinositol 4,5-bisphosphate and RNA. The Nuclear export signal motif lies at 16–22 (WEKIRLR). The Nuclear localization signal signature appears at 26–32 (KKKYRLK). Positions 73–77 (EELKS) are interaction with membrane phosphatidylinositol 4,5-bisphosphate. Residues 108 to 127 (QNKSQQKTQQAAADKEKDNK) are disordered. Residues 109 to 118 (NKSQQKTQQA) are compositionally biased toward polar residues. Tyrosine 132 is subject to Phosphotyrosine; by host. The interaction with human PPIA/CYPA and NUP153 stretch occupies residues 189-227 (NTVGGHQAAMQMLKDTINEEAAEWDRVHPVHAGPIPPGQ). A dimerization/Multimerization of capsid protein p24 region spans residues 277-363 (YSPVSILDIK…GGPSHKARVL (87 aa)). 2 consecutive CCHC-type zinc fingers follow at residues 391-408 (VKCF…NCRA) and 412-429 (KGCW…DCTE). The disordered stretch occupies residues 445–482 (EARKFSPEQARTNSPTSRELRVRRGDDPLSEAGAAEGQ). Residues 462–471 (RELRVRRGDD) show a composition bias toward basic and acidic residues. Positions 489–493 (PQITL) are dimerization of protease. The Peptidase A2 domain maps to 508–577 (REALLDTGAD…TPVNIIGRNI (70 aa)). Aspartate 513 (for protease activity; shared with dimeric partner) is an active-site residue. Dimerization of protease regions lie at residues 537 to 543 (GIGGFIK) and 576 to 588 (NILT…LNFP). A Reverse transcriptase domain is found at 631-821 (EGKISRIGPE…PPFLWMGYEL (191 aa)). Mg(2+) is bound by residues aspartate 697, aspartate 772, and aspartate 773. Residues 814-822 (FLWMGYELH) are RT 'primer grip'. The Tryptophan repeat motif signature appears at 985–1001 (WETWWTEYWQATWIPEW). The RNase H type-1 domain maps to 1021 to 1144 (IAGAETYYID…VDKLVSSGVR (124 aa)). The Mg(2+) site is built by aspartate 1030, glutamate 1065, aspartate 1085, and aspartate 1136. An Integrase-type zinc finger spans residues 1150-1191 (DGIDKAQEEHERYHNNWRAVASDFNLPPIVAKEIVASCDKCQ). Residues histidine 1159, histidine 1163, cysteine 1187, and cysteine 1190 each coordinate Zn(2+). In terms of domain architecture, Integrase catalytic spans 1201–1351 (VDCSPGIWQL…SAGERIIDII (151 aa)). The Mg(2+) site is built by aspartate 1211, aspartate 1263, and glutamate 1299. A DNA-binding region (integrase-type) is located at residues 1370 to 1417 (FRVYYRDSRDPIWKGPAKLLWKGEGAVVIQDNSEIKVVPRREAKIIRD).

In terms of assembly, homotrimer; further assembles as hexamers of trimers. Interacts with gp41 (via C-terminus). Interacts with host CALM1; this interaction induces a conformational change in the Matrix protein, triggering exposure of the myristate group. Interacts with host AP3D1; this interaction allows the polyprotein trafficking to multivesicular bodies during virus assembly. Part of the pre-integration complex (PIC) which is composed of viral genome, matrix protein, Vpr and integrase. As to quaternary structure, homodimer; the homodimer further multimerizes as homohexamers or homopentamers. Interacts with human PPIA/CYPA; This interaction stabilizes the capsid. Interacts with human NUP153. Interacts with host PDZD8; this interaction stabilizes the capsid. Interacts with monkey TRIM5; this interaction destabilizes the capsid. Homodimer, whose active site consists of two apposed aspartic acid residues. In terms of assembly, heterodimer of p66 RT and p51 RT (RT p66/p51). Heterodimerization of RT is essential for DNA polymerase activity. The overall folding of the subdomains is similar in p66 RT and p51 RT but the spatial arrangements of the subdomains are dramatically different. As to quaternary structure, homodimer; possibly can form homotetramer. Part of the pre-integration complex (PIC) which is composed of viral genome, matrix protein, Vpr and integrase. Interacts with human SMARCB1/INI1 and human PSIP1/LEDGF isoform 1. Interacts with human KPNA3; this interaction might play a role in nuclear import of the pre-integration complex. Interacts with human NUP153; this interaction might play a role in nuclear import of the pre-integration complex. It depends on Mg(2+) as a cofactor. Specific enzymatic cleavages by the viral protease yield mature proteins. The protease is released by autocatalytic cleavage. The polyprotein is cleaved during and after budding, this process is termed maturation. Proteolytic cleavage of p66 RT removes the RNase H domain to yield the p51 RT subunit. Nucleocapsid protein p7 might be further cleaved after virus entry. In terms of processing, tyrosine phosphorylated presumably in the virion by a host kinase. Phosphorylation is apparently not a major regulator of membrane association. Post-translationally, phosphorylated possibly by host MAPK1; this phosphorylation is necessary for Pin1-mediated virion uncoating. Methylated by host PRMT6, impairing its function by reducing RNA annealing and the initiation of reverse transcription.

It is found in the host cell membrane. The protein localises to the host endosome. It localises to the host multivesicular body. Its subcellular location is the virion membrane. The protein resides in the host nucleus. It is found in the host cytoplasm. The protein localises to the virion. The catalysed reaction is Specific for a P1 residue that is hydrophobic, and P1' variable, but often Pro.. It catalyses the reaction Endohydrolysis of RNA in RNA/DNA hybrids. Three different cleavage modes: 1. sequence-specific internal cleavage of RNA. Human immunodeficiency virus type 1 and Moloney murine leukemia virus enzymes prefer to cleave the RNA strand one nucleotide away from the RNA-DNA junction. 2. RNA 5'-end directed cleavage 13-19 nucleotides from the RNA end. 3. DNA 3'-end directed cleavage 15-20 nucleotides away from the primer terminus.. The enzyme catalyses 3'-end directed exonucleolytic cleavage of viral RNA-DNA hybrid.. It carries out the reaction DNA(n) + a 2'-deoxyribonucleoside 5'-triphosphate = DNA(n+1) + diphosphate. With respect to regulation, protease: The viral protease is inhibited by many synthetic protease inhibitors (PIs), such as amprenavir, atazanavir, indinavir, loprinavir, nelfinavir, ritonavir and saquinavir. Use of protease inhibitors in tritherapy regimens permit more ambitious therapeutic strategies. Reverse transcriptase/ribonuclease H: RT can be inhibited either by nucleoside RT inhibitors (NRTIs) or by non nucleoside RT inhibitors (NNRTIs). NRTIs act as chain terminators, whereas NNRTIs inhibit DNA polymerization by binding a small hydrophobic pocket near the RT active site and inducing an allosteric change in this region. Classical NRTIs are abacavir, adefovir (PMEA), didanosine (ddI), lamivudine (3TC), stavudine (d4T), tenofovir (PMPA), zalcitabine (ddC), and zidovudine (AZT). Classical NNRTIs are atevirdine (BHAP U-87201E), delavirdine, efavirenz (DMP-266), emivirine (I-EBU), and nevirapine (BI-RG-587). The tritherapies used as a basic effective treatment of AIDS associate two NRTIs and one NNRTI. Functionally, mediates, with Gag polyprotein, the essential events in virion assembly, including binding the plasma membrane, making the protein-protein interactions necessary to create spherical particles, recruiting the viral Env proteins, and packaging the genomic RNA via direct interactions with the RNA packaging sequence (Psi). Gag-Pol polyprotein may regulate its own translation, by the binding genomic RNA in the 5'-UTR. At low concentration, the polyprotein would promote translation, whereas at high concentration, the polyprotein would encapsidate genomic RNA and then shut off translation. In terms of biological role, targets the polyprotein to the plasma membrane via a multipartite membrane-binding signal, that includes its myristoylated N-terminus. Matrix protein is part of the pre-integration complex. Implicated in the release from host cell mediated by Vpu. Binds to RNA. Its function is as follows. Forms the conical core that encapsulates the genomic RNA-nucleocapsid complex in the virion. Most core are conical, with only 7% tubular. The core is constituted by capsid protein hexamer subunits. The core is disassembled soon after virion entry. Host restriction factors such as TRIM5-alpha or TRIMCyp bind retroviral capsids and cause premature capsid disassembly, leading to blocks in reverse transcription. Capsid restriction by TRIM5 is one of the factors which restricts HIV-1 to the human species. Host PIN1 apparently facilitates the virion uncoating. On the other hand, interactions with PDZD8 or CYPA stabilize the capsid. Encapsulates and protects viral dimeric unspliced genomic RNA (gRNA). Binds these RNAs through its zinc fingers. Acts as a nucleic acid chaperone which is involved in rearangement of nucleic acid secondary structure during gRNA retrotranscription. Also facilitates template switch leading to recombination. As part of the polyprotein, participates in gRNA dimerization, packaging, tRNA incorporation and virion assembly. Functionally, aspartyl protease that mediates proteolytic cleavages of Gag and Gag-Pol polyproteins during or shortly after the release of the virion from the plasma membrane. Cleavages take place as an ordered, step-wise cascade to yield mature proteins. This process is called maturation. Displays maximal activity during the budding process just prior to particle release from the cell. Also cleaves Nef and Vif, probably concomitantly with viral structural proteins on maturation of virus particles. Hydrolyzes host EIF4GI and PABP1 in order to shut off the capped cellular mRNA translation. The resulting inhibition of cellular protein synthesis serves to ensure maximal viral gene expression and to evade host immune response. Also mediates cleavage of host YTHDF3. Mediates cleavage of host CARD8, thereby activating the CARD8 inflammasome, leading to the clearance of latent HIV-1 in patient CD4(+) T-cells after viral reactivation; in contrast, HIV-1 can evade CARD8-sensing when its protease remains inactive in infected cells prior to viral budding. In terms of biological role, multifunctional enzyme that converts the viral RNA genome into dsDNA in the cytoplasm, shortly after virus entry into the cell. This enzyme displays a DNA polymerase activity that can copy either DNA or RNA templates, and a ribonuclease H (RNase H) activity that cleaves the RNA strand of RNA-DNA heteroduplexes in a partially processive 3' to 5' endonucleasic mode. Conversion of viral genomic RNA into dsDNA requires many steps. A tRNA(3)-Lys binds to the primer-binding site (PBS) situated at the 5'-end of the viral RNA. RT uses the 3' end of the tRNA primer to perform a short round of RNA-dependent minus-strand DNA synthesis. The reading proceeds through the U5 region and ends after the repeated (R) region which is present at both ends of viral RNA. The portion of the RNA-DNA heteroduplex is digested by the RNase H, resulting in a ssDNA product attached to the tRNA primer. This ssDNA/tRNA hybridizes with the identical R region situated at the 3' end of viral RNA. This template exchange, known as minus-strand DNA strong stop transfer, can be either intra- or intermolecular. RT uses the 3' end of this newly synthesized short ssDNA to perform the RNA-dependent minus-strand DNA synthesis of the whole template. RNase H digests the RNA template except for two polypurine tracts (PPTs) situated at the 5'-end and near the center of the genome. It is not clear if both polymerase and RNase H activities are simultaneous. RNase H probably can proceed both in a polymerase-dependent (RNA cut into small fragments by the same RT performing DNA synthesis) and a polymerase-independent mode (cleavage of remaining RNA fragments by free RTs). Secondly, RT performs DNA-directed plus-strand DNA synthesis using the PPTs that have not been removed by RNase H as primers. PPTs and tRNA primers are then removed by RNase H. The 3' and 5' ssDNA PBS regions hybridize to form a circular dsDNA intermediate. Strand displacement synthesis by RT to the PBS and PPT ends produces a blunt ended, linear dsDNA copy of the viral genome that includes long terminal repeats (LTRs) at both ends. Its function is as follows. Catalyzes viral DNA integration into the host chromosome, by performing a series of DNA cutting and joining reactions. This enzyme activity takes place after virion entry into a cell and reverse transcription of the RNA genome in dsDNA. The first step in the integration process is 3' processing. This step requires a complex comprising the viral genome, matrix protein, Vpr and integrase. This complex is called the pre-integration complex (PIC). The integrase protein removes 2 nucleotides from each 3' end of the viral DNA, leaving recessed CA OH's at the 3' ends. In the second step, the PIC enters cell nucleus. This process is mediated through integrase and Vpr proteins, and allows the virus to infect a non dividing cell. This ability to enter the nucleus is specific of lentiviruses, other retroviruses cannot and rely on cell division to access cell chromosomes. In the third step, termed strand transfer, the integrase protein joins the previously processed 3' ends to the 5' ends of strands of target cellular DNA at the site of integration. The 5'-ends are produced by integrase-catalyzed staggered cuts, 5 bp apart. A Y-shaped, gapped, recombination intermediate results, with the 5'-ends of the viral DNA strands and the 3' ends of target DNA strands remaining unjoined, flanking a gap of 5 bp. The last step is viral DNA integration into host chromosome. This involves host DNA repair synthesis in which the 5 bp gaps between the unjoined strands are filled in and then ligated. Since this process occurs at both cuts flanking the HIV genome, a 5 bp duplication of host DNA is produced at the ends of HIV-1 integration. Alternatively, Integrase may catalyze the excision of viral DNA just after strand transfer, this is termed disintegration. In Homo sapiens (Human), this protein is Gag-Pol polyprotein (gag-pol).